A 491-amino-acid polypeptide reads, in one-letter code: Aspartyl/glutamyl-tRNA(Asn/Gln) amidotransferase subunit B (491 aa).

This sequence belongs to the GatB/GatE family. GatB subfamily. In terms of assembly, heterotrimer of A, B and C subunits.

It carries out the reaction L-glutamyl-tRNA(Gln) + L-glutamine + ATP + H2O = L-glutaminyl-tRNA(Gln) + L-glutamate + ADP + phosphate + H(+). It catalyses the reaction L-aspartyl-tRNA(Asn) + L-glutamine + ATP + H2O = L-asparaginyl-tRNA(Asn) + L-glutamate + ADP + phosphate + 2 H(+). Functionally, allows the formation of correctly charged Asn-tRNA(Asn) or Gln-tRNA(Gln) through the transamidation of misacylated Asp-tRNA(Asn) or Glu-tRNA(Gln) in organisms which lack either or both of asparaginyl-tRNA or glutaminyl-tRNA synthetases. The reaction takes place in the presence of glutamine and ATP through an activated phospho-Asp-tRNA(Asn) or phospho-Glu-tRNA(Gln). The chain is Aspartyl/glutamyl-tRNA(Asn/Gln) amidotransferase subunit B from Burkholderia cenocepacia (strain HI2424).